Consider the following 431-residue polypeptide: 3-phosphoshikimate 1-carboxyvinyltransferase (431 aa).

3-phosphoshikimate contacts are provided by lysine 21, serine 22, and arginine 26. Position 21 (lysine 21) interacts with phosphoenolpyruvate. 2 residues coordinate phosphoenolpyruvate: glycine 94 and arginine 122. 4 residues coordinate 3-phosphoshikimate: serine 167, glutamine 169, aspartate 315, and lysine 342. Glutamine 169 contacts phosphoenolpyruvate. Aspartate 315 acts as the Proton acceptor in catalysis. 2 residues coordinate phosphoenolpyruvate: arginine 346 and arginine 388.

It belongs to the EPSP synthase family. In terms of assembly, monomer.

The protein resides in the cytoplasm. The catalysed reaction is 3-phosphoshikimate + phosphoenolpyruvate = 5-O-(1-carboxyvinyl)-3-phosphoshikimate + phosphate. The protein operates within metabolic intermediate biosynthesis; chorismate biosynthesis; chorismate from D-erythrose 4-phosphate and phosphoenolpyruvate: step 6/7. In terms of biological role, catalyzes the transfer of the enolpyruvyl moiety of phosphoenolpyruvate (PEP) to the 5-hydroxyl of shikimate-3-phosphate (S3P) to produce enolpyruvyl shikimate-3-phosphate and inorganic phosphate. In Pelotomaculum thermopropionicum (strain DSM 13744 / JCM 10971 / SI), this protein is 3-phosphoshikimate 1-carboxyvinyltransferase.